The primary structure comprises 72 residues: Translation initiation factor IF-1 (72 aa).

Positions 1–72 (MSKEDHIEME…SKARITFRHR (72 aa)) constitute an S1-like domain.

It belongs to the IF-1 family. Component of the 30S ribosomal translation pre-initiation complex which assembles on the 30S ribosome in the order IF-2 and IF-3, IF-1 and N-formylmethionyl-tRNA(fMet); mRNA recruitment can occur at any time during PIC assembly.

It localises to the cytoplasm. In terms of biological role, one of the essential components for the initiation of protein synthesis. Stabilizes the binding of IF-2 and IF-3 on the 30S subunit to which N-formylmethionyl-tRNA(fMet) subsequently binds. Helps modulate mRNA selection, yielding the 30S pre-initiation complex (PIC). Upon addition of the 50S ribosomal subunit IF-1, IF-2 and IF-3 are released leaving the mature 70S translation initiation complex. The protein is Translation initiation factor IF-1 of Methylococcus capsulatus (strain ATCC 33009 / NCIMB 11132 / Bath).